The chain runs to 485 residues: Peptidyl-prolyl cis-trans isomerase-like 4 (485 aa).

The PPIase cyclophilin-type domain occupies 1 to 172 (MSVLLETSAG…IDIRIKHTVI (172 aa)). The 79-residue stretch at 251–329 (NVLFVCKLNP…RRIHVDFSQS (79 aa)) folds into the RRM domain. Positions 377 to 485 (NYRMVYGEEE…RDENDRRSRR (109 aa)) are disordered. Residues 426–485 (RPRDRSRDRYHKPRDDRRGDRRDRDRRDQDRNRYRDRDHRDRGREKDRYGRDENDRRSRR) are compositionally biased toward basic and acidic residues.

This sequence belongs to the cyclophilin-type PPIase family. PPIL4 subfamily.

The protein resides in the nucleus. The enzyme catalyses [protein]-peptidylproline (omega=180) = [protein]-peptidylproline (omega=0). PPIases accelerate the folding of proteins. It catalyzes the cis-trans isomerization of proline imidic peptide bonds in oligopeptides. The sequence is that of Peptidyl-prolyl cis-trans isomerase-like 4 (CYP6) from Gibberella zeae (strain ATCC MYA-4620 / CBS 123657 / FGSC 9075 / NRRL 31084 / PH-1) (Wheat head blight fungus).